The following is a 270-amino-acid chain: uncharacterized protein (270 aa).

An N-terminal signal peptide occupies residues 1 to 23 (MKKLLIILAATLVLVLGSSGNFR).

This is an uncharacterized protein from Archaeoglobus fulgidus (strain ATCC 49558 / DSM 4304 / JCM 9628 / NBRC 100126 / VC-16).